The primary structure comprises 212 residues: Peptide methionine sulfoxide reductase MsrA (212 aa).

Cys52 is a catalytic residue.

This sequence belongs to the MsrA Met sulfoxide reductase family.

The enzyme catalyses L-methionyl-[protein] + [thioredoxin]-disulfide + H2O = L-methionyl-(S)-S-oxide-[protein] + [thioredoxin]-dithiol. It catalyses the reaction [thioredoxin]-disulfide + L-methionine + H2O = L-methionine (S)-S-oxide + [thioredoxin]-dithiol. Functionally, has an important function as a repair enzyme for proteins that have been inactivated by oxidation. Catalyzes the reversible oxidation-reduction of methionine sulfoxide in proteins to methionine. The protein is Peptide methionine sulfoxide reductase MsrA of Cronobacter sakazakii (strain ATCC BAA-894) (Enterobacter sakazakii).